A 594-amino-acid chain; its full sequence is UV-stimulated scaffold protein A homolog (594 aa).

The segment at 24-170 (RKNLNRFIRE…VTLKKTKFVD (147 aa)) is VHS-like. Positions 170-198 (DYENGAKKIEAERKRKKILEERKMKMIEN) form a coiled coil. The segment at 466–493 (RKVCLAKMKSGKLCPRKDYYTCPLHGKI) adopts a UVSSA-type zinc-finger fold. Residues cysteine 469, cysteine 479, cysteine 487, and histidine 490 each coordinate Zn(2+). A coiled-coil region spans residues 503 to 540 (INEEDRLEENYRKEQNHLKEADKIRQMIEKEYESKTKR). Positions 533–558 (EYESKTKRRKKHDVDTTASEDVRNRL) are disordered. Over residues 544 to 558 (HDVDTTASEDVRNRL) the composition is skewed to basic and acidic residues.

This sequence belongs to the UVSSA family.

Its subcellular location is the chromosome. Functionally, factor involved in transcription-coupled nucleotide excision repair (TC-NER) in response to UV damage. TC-NER allows RNA polymerase II-blocking lesions to be rapidly removed from the transcribed strand of active genes. This is UV-stimulated scaffold protein A homolog from Caenorhabditis elegans.